A 341-amino-acid polypeptide reads, in one-letter code: Phosphate acyltransferase (341 aa).

This sequence belongs to the PlsX family. In terms of assembly, homodimer. Probably interacts with PlsY.

It is found in the cytoplasm. The catalysed reaction is a fatty acyl-[ACP] + phosphate = an acyl phosphate + holo-[ACP]. Its pathway is lipid metabolism; phospholipid metabolism. Its function is as follows. Catalyzes the reversible formation of acyl-phosphate (acyl-PO(4)) from acyl-[acyl-carrier-protein] (acyl-ACP). This enzyme utilizes acyl-ACP as fatty acyl donor, but not acyl-CoA. The chain is Phosphate acyltransferase from Pseudoalteromonas atlantica (strain T6c / ATCC BAA-1087).